A 248-amino-acid polypeptide reads, in one-letter code: MAGHSQFKNIMHRKGRQDAVRSKVFSKLAREITVAAKQGSPDPAMNPRLRLAVQNAKSQSMPKDNIERAIKKASGGDVENYDEVRYEGYGPGGVAIIVEALTDNRNRTASNVRAAFTKAGGALGETGSVGFMFNRIGEIIYKPEAGTAESVMEAAIEAGAEDVQSEETGHHITCAFEDIGEVSKMLEATLGEAESIKTIWKPTTLAPVDEEKAMSILRLISTLEEDDDVQNVYANFDVSDEVLAALSA.

This sequence belongs to the TACO1 family.

Its subcellular location is the cytoplasm. In Bartonella bacilliformis (strain ATCC 35685 / KC583 / Herrer 020/F12,63), this protein is Probable transcriptional regulatory protein BARBAKC583_0163.